Reading from the N-terminus, the 171-residue chain is ATP synthase subunit b (171 aa).

The chain crosses the membrane as a helical span at residues 10-30 (GLYYGDSIFYAVCFLLLMWII).

The protein belongs to the ATPase B chain family. As to quaternary structure, F-type ATPases have 2 components, F(1) - the catalytic core - and F(0) - the membrane proton channel. F(1) has five subunits: alpha(3), beta(3), gamma(1), delta(1), epsilon(1). F(0) has three main subunits: a(1), b(2) and c(10-14). The alpha and beta chains form an alternating ring which encloses part of the gamma chain. F(1) is attached to F(0) by a central stalk formed by the gamma and epsilon chains, while a peripheral stalk is formed by the delta and b chains.

It localises to the cell membrane. F(1)F(0) ATP synthase produces ATP from ADP in the presence of a proton or sodium gradient. F-type ATPases consist of two structural domains, F(1) containing the extramembraneous catalytic core and F(0) containing the membrane proton channel, linked together by a central stalk and a peripheral stalk. During catalysis, ATP synthesis in the catalytic domain of F(1) is coupled via a rotary mechanism of the central stalk subunits to proton translocation. In terms of biological role, component of the F(0) channel, it forms part of the peripheral stalk, linking F(1) to F(0). In Levilactobacillus brevis (strain ATCC 367 / BCRC 12310 / CIP 105137 / JCM 1170 / LMG 11437 / NCIMB 947 / NCTC 947) (Lactobacillus brevis), this protein is ATP synthase subunit b.